The sequence spans 456 residues: Enolase (456 aa).

Residue Gln-164 coordinates (2R)-2-phosphoglycerate. Residue Glu-207 is the Proton donor of the active site. Mg(2+) contacts are provided by Asp-244, Glu-287, and Asp-314. Residues Lys-339, Arg-368, Ser-369, and Lys-390 each coordinate (2R)-2-phosphoglycerate. The active-site Proton acceptor is the Lys-339.

Belongs to the enolase family. In terms of assembly, component of the RNA degradosome, a multiprotein complex involved in RNA processing and mRNA degradation. Mg(2+) serves as cofactor.

It localises to the cytoplasm. The protein resides in the secreted. Its subcellular location is the cell surface. The catalysed reaction is (2R)-2-phosphoglycerate = phosphoenolpyruvate + H2O. Its pathway is carbohydrate degradation; glycolysis; pyruvate from D-glyceraldehyde 3-phosphate: step 4/5. In terms of biological role, catalyzes the reversible conversion of 2-phosphoglycerate (2-PG) into phosphoenolpyruvate (PEP). It is essential for the degradation of carbohydrates via glycolysis. In Francisella tularensis subsp. novicida (strain U112), this protein is Enolase.